A 430-amino-acid chain; its full sequence is Aspartate aminotransferase, mitochondrial (430 aa).

The N-terminal 29 residues, 1–29 (MALLHSGRVLSGIAAAFHPGLAAAASARA), are a transit peptide targeting the mitochondrion. Thr48 carries the phosphothreonine modification. Residue Lys59 is modified to N6-acetyllysine. Gly65 is a substrate binding site. Position 73 is an N6-acetyllysine; alternate (Lys73). An N6-succinyllysine; alternate modification is found at Lys73. Lys82 bears the N6-acetyllysine mark. At Lys90 the chain carries N6-acetyllysine; alternate. The residue at position 90 (Lys90) is an N6-succinyllysine; alternate. 3'-nitrotyrosine; alternate is present on Tyr96. A Phosphotyrosine; alternate modification is found at Tyr96. N6-acetyllysine; alternate is present on residues Lys107 and Lys122. 2 positions are modified to N6-succinyllysine; alternate: Lys107 and Lys122. The residue at position 143 (Ser143) is a Phosphoserine. An N6-acetyllysine; alternate modification is found at Lys159. Lys159 bears the N6-succinyllysine; alternate mark. Trp162 provides a ligand contact to substrate. Lys185 carries the N6-acetyllysine; alternate modification. At Lys185 the chain carries N6-succinyllysine; alternate. Asn215 contributes to the substrate binding site. The residue at position 227 (Lys227) is an N6-succinyllysine. Lys234 is subject to N6-acetyllysine. An N6-acetyllysine; alternate mark is found at Lys279 and Lys296. Lys279 carries the N6-(pyridoxal phosphate)lysine; alternate modification. Lys296 is subject to N6-succinyllysine; alternate. N6-acetyllysine is present on Lys302. The residue at position 309 (Lys309) is an N6-acetyllysine; alternate. Lys309 is modified (N6-succinyllysine; alternate). Arg313 bears the Asymmetric dimethylarginine mark. Thr333 carries the phosphothreonine modification. An N6-acetyllysine; alternate modification is found at Lys338. Lys338 carries the post-translational modification N6-succinyllysine; alternate. Lys345 bears the N6-acetyllysine mark. Lys363 bears the N6-acetyllysine; alternate mark. Lys363 is modified (N6-succinyllysine; alternate). 2 positions are modified to N6-acetyllysine: Lys364 and Lys387. N6-acetyllysine; alternate occurs at positions 396 and 404. Lys396 and Lys404 each carry N6-succinyllysine; alternate. Position 407 (Arg407) interacts with substrate.

Belongs to the class-I pyridoxal-phosphate-dependent aminotransferase family. As to quaternary structure, homodimer. Pyridoxal 5'-phosphate is required as a cofactor.

It localises to the mitochondrion matrix. The protein localises to the cell membrane. It carries out the reaction L-aspartate + 2-oxoglutarate = oxaloacetate + L-glutamate. The enzyme catalyses L-kynurenine + 2-oxoglutarate = kynurenate + L-glutamate + H2O. Catalyzes the irreversible transamination of the L-tryptophan metabolite L-kynurenine to form kynurenic acid (KA). As a member of the malate-aspartate shuttle, it has a key role in the intracellular NAD(H) redox balance. Is important for metabolite exchange between mitochondria and cytosol, and for amino acid metabolism. Facilitates cellular uptake of long-chain free fatty acids. The polypeptide is Aspartate aminotransferase, mitochondrial (GOT2) (Macaca fascicularis (Crab-eating macaque)).